Here is a 293-residue protein sequence, read N- to C-terminus: Aspartate carbamoyltransferase catalytic subunit (293 aa).

Carbamoyl phosphate-binding residues include arginine 50 and threonine 51. Lysine 78 is an L-aspartate binding site. The carbamoyl phosphate site is built by arginine 100, histidine 127, and glutamine 130. Residues arginine 160 and arginine 210 each coordinate L-aspartate. Residues alanine 253 and proline 254 each contribute to the carbamoyl phosphate site.

Belongs to the aspartate/ornithine carbamoyltransferase superfamily. ATCase family. Heterododecamer (2C3:3R2) of six catalytic PyrB chains organized as two trimers (C3), and six regulatory PyrI chains organized as three dimers (R2).

The catalysed reaction is carbamoyl phosphate + L-aspartate = N-carbamoyl-L-aspartate + phosphate + H(+). It functions in the pathway pyrimidine metabolism; UMP biosynthesis via de novo pathway; (S)-dihydroorotate from bicarbonate: step 2/3. Its function is as follows. Catalyzes the condensation of carbamoyl phosphate and aspartate to form carbamoyl aspartate and inorganic phosphate, the committed step in the de novo pyrimidine nucleotide biosynthesis pathway. This Staphylococcus epidermidis (strain ATCC 35984 / DSM 28319 / BCRC 17069 / CCUG 31568 / BM 3577 / RP62A) protein is Aspartate carbamoyltransferase catalytic subunit.